The chain runs to 78 residues: UPF0369 protein RF_1112 (78 aa).

It belongs to the SDHAF4 family.

The protein is UPF0369 protein RF_1112 of Rickettsia felis (strain ATCC VR-1525 / URRWXCal2) (Rickettsia azadi).